The primary structure comprises 307 residues: D-alanine--D-alanine ligase (307 aa).

The 201-residue stretch at Lys-101–Glu-301 folds into the ATP-grasp domain. ATP is bound at residue Met-128–Thr-182. Asp-251, Glu-268, and Asn-270 together coordinate Mg(2+).

The protein belongs to the D-alanine--D-alanine ligase family. Mg(2+) serves as cofactor. Mn(2+) is required as a cofactor.

Its subcellular location is the cytoplasm. The catalysed reaction is 2 D-alanine + ATP = D-alanyl-D-alanine + ADP + phosphate + H(+). The protein operates within cell wall biogenesis; peptidoglycan biosynthesis. Cell wall formation. The protein is D-alanine--D-alanine ligase of Methylocella silvestris (strain DSM 15510 / CIP 108128 / LMG 27833 / NCIMB 13906 / BL2).